The sequence spans 120 residues: Late histone H2A.2.2 (120 aa).

The segment covering 1–18 (MSGRGKGAKSKSKAKSRS) has biased composition (basic residues). The tract at residues 1-22 (MSGRGKGAKSKSKAKSRSSRAG) is disordered. Ser2 carries the post-translational modification N-acetylserine. Phosphoserine is present on Ser2. The residue at position 104 (Gln104) is an N5-methylglutamine. Lys119 is covalently cross-linked (Glycyl lysine isopeptide (Lys-Gly) (interchain with G-Cter in ubiquitin)).

This sequence belongs to the histone H2A family. In terms of assembly, the nucleosome is a histone octamer containing two molecules each of H2A, H2B, H3 and H4 assembled in one H3-H4 heterotetramer and two H2A-H2B heterodimers. The octamer wraps approximately 147 bp of DNA. Monoubiquitination of Lys-119 gives a specific tag for epigenetic transcriptional repression. Post-translationally, phosphorylation of Ser-2 directly represses transcription.

The protein resides in the nucleus. It localises to the chromosome. Core component of nucleosome. Nucleosomes wrap and compact DNA into chromatin, limiting DNA accessibility to the cellular machineries which require DNA as a template. Histones thereby play a central role in transcription regulation, DNA repair, DNA replication and chromosomal stability. DNA accessibility is regulated via a complex set of post-translational modifications of histones, also called histone code, and nucleosome remodeling. The sequence is that of Late histone H2A.2.2 from Psammechinus miliaris (Green sea urchin).